Consider the following 104-residue polypeptide: UPF0134 protein MPN_104 (104 aa).

Belongs to the UPF0134 family.

The polypeptide is UPF0134 protein MPN_104 (Mycoplasma pneumoniae (strain ATCC 29342 / M129 / Subtype 1) (Mycoplasmoides pneumoniae)).